We begin with the raw amino-acid sequence, 89 residues long: Small ribosomal subunit protein uS15 (89 aa).

Belongs to the universal ribosomal protein uS15 family. Part of the 30S ribosomal subunit. Forms a bridge to the 50S subunit in the 70S ribosome, contacting the 23S rRNA.

One of the primary rRNA binding proteins, it binds directly to 16S rRNA where it helps nucleate assembly of the platform of the 30S subunit by binding and bridging several RNA helices of the 16S rRNA. Functionally, forms an intersubunit bridge (bridge B4) with the 23S rRNA of the 50S subunit in the ribosome. The polypeptide is Small ribosomal subunit protein uS15 (Carboxydothermus hydrogenoformans (strain ATCC BAA-161 / DSM 6008 / Z-2901)).